We begin with the raw amino-acid sequence, 139 residues long: Tetra-peptide repeat homeobox-like protein (139 aa).

Disordered regions lie at residues 1-22 and 78-139; these read MQDP…RQRQ and ERWF…QQPQ. The segment at residues 20-79 is a DNA-binding region (homeobox); that stretch reads QRQDRTIYNWKQQEVLENHFKEEQYPDYDTRQELAEMLNLREYQVQVWFKNRRAKRSRER. Residues 82–139 are compositionally biased toward low complexity; it reads QKQLQQLQKHPQQQHPQQQHPQQQLQQQQPQQQPQQQQPQQQPQQQQPQQQQLHQQPQ.

The protein belongs to the paired homeobox family.

The protein localises to the nucleus. In terms of biological role, transcription factor required for zygotic genome activation (ZGA), a critical event in early embryonic development during which the developmental control passes from maternally provided mRNAs to the expression of the zygotic genome after fertilization. Protein produced from maternal transcripts that binds and activates expression of key ZGA marker genes, such as NANOGNB, ZSCAN4, DUXB, KLF5 and DPPA3. Binds to regulatory DNA sequences containing a 5'-TAATCC-3' sequence motif. This Homo sapiens (Human) protein is Tetra-peptide repeat homeobox-like protein.